The sequence spans 507 residues: Ribonuclease Y (507 aa).

Residues 1-21 form a helical membrane-spanning segment; that stretch reads MLWYIVAGAGGLLIGYLIASY. The KH domain maps to 197–282; that stretch reads TVSTVSLPSD…EMYEKAKQEV (86 aa). The 94-residue stretch at 323-416 folds into the HD domain; it reads VLNHSIEVAL…VAAADALSAA (94 aa).

It belongs to the RNase Y family.

The protein resides in the cell membrane. Endoribonuclease that initiates mRNA decay. In Thermotoga petrophila (strain ATCC BAA-488 / DSM 13995 / JCM 10881 / RKU-1), this protein is Ribonuclease Y.